A 946-amino-acid polypeptide reads, in one-letter code: C-1-tetrahydrofolate synthase, cytoplasmic (946 aa).

The methylenetetrahydrofolate dehydrogenase and cyclohydrolase stretch occupies residues 2–319 (AGQVLDGKAC…PPLPLKLLTP (318 aa)). Substrate is bound by residues 51–55 (YVRMK) and 98–100 (VQL). 169–171 (GRS) contributes to the NADP(+) binding site. A Phosphoserine modification is found at S176. S194 serves as a coordination point for NADP(+). Substrate is bound at residue 277–281 (PGGVG). Residue T318 is modified to Phosphothreonine. Residues 320–946 (VPSDIDISRA…DDDGEIDGLF (627 aa)) are formyltetrahydrofolate synthetase. S322 carries the post-translational modification Phosphoserine. Residue 384–391 (TPLGEGKS) coordinates ATP.

The protein in the N-terminal section; belongs to the tetrahydrofolate dehydrogenase/cyclohydrolase family. This sequence in the C-terminal section; belongs to the formate--tetrahydrofolate ligase family. As to quaternary structure, homodimer.

It localises to the cytoplasm. The protein localises to the nucleus. It carries out the reaction (6R)-5,10-methylene-5,6,7,8-tetrahydrofolate + NADP(+) = (6R)-5,10-methenyltetrahydrofolate + NADPH. The catalysed reaction is (6R)-5,10-methenyltetrahydrofolate + H2O = (6R)-10-formyltetrahydrofolate + H(+). It catalyses the reaction (6S)-5,6,7,8-tetrahydrofolate + formate + ATP = (6R)-10-formyltetrahydrofolate + ADP + phosphate. The protein operates within one-carbon metabolism; tetrahydrofolate interconversion. Functionally, cytoplasmic isozyme of C-1-tetrahydrofolate synthase. The trifunctional enzyme catalyzes the interconversion of the one-carbon derivatives of tetrahydrofolate (THF) between different oxidation states by the enzymatic activities 10-formyltetrahydrofolate synthetase, 5,lO-methenyltetrahydrofolate cyclohydrolase, and 5,lO-methylenetetrahydrofolate dehydrogenase. Involved in the generation of one-carbon intermediates in the biosynthesis of the purine bases. The polypeptide is C-1-tetrahydrofolate synthase, cytoplasmic (ADE3) (Saccharomyces cerevisiae (strain ATCC 204508 / S288c) (Baker's yeast)).